A 162-amino-acid polypeptide reads, in one-letter code: ATP synthase subunit b (162 aa).

A helical transmembrane segment spans residues Leu8 to Leu28.

This sequence belongs to the ATPase B chain family. F-type ATPases have 2 components, F(1) - the catalytic core - and F(0) - the membrane proton channel. F(1) has five subunits: alpha(3), beta(3), gamma(1), delta(1), epsilon(1). F(0) has three main subunits: a(1), b(2) and c(10-14). The alpha and beta chains form an alternating ring which encloses part of the gamma chain. F(1) is attached to F(0) by a central stalk formed by the gamma and epsilon chains, while a peripheral stalk is formed by the delta and b chains.

The protein resides in the cell inner membrane. F(1)F(0) ATP synthase produces ATP from ADP in the presence of a proton or sodium gradient. F-type ATPases consist of two structural domains, F(1) containing the extramembraneous catalytic core and F(0) containing the membrane proton channel, linked together by a central stalk and a peripheral stalk. During catalysis, ATP synthesis in the catalytic domain of F(1) is coupled via a rotary mechanism of the central stalk subunits to proton translocation. Functionally, component of the F(0) channel, it forms part of the peripheral stalk, linking F(1) to F(0). In Pseudothermotoga lettingae (strain ATCC BAA-301 / DSM 14385 / NBRC 107922 / TMO) (Thermotoga lettingae), this protein is ATP synthase subunit b.